The following is a 1146-amino-acid chain: Transcription-repair-coupling factor (1146 aa).

The 162-residue stretch at D617–I778 folds into the Helicase ATP-binding domain. G630–T637 contributes to the ATP binding site. The DEEH box motif lies at D731–H734. The Helicase C-terminal domain occupies V800–E953.

It in the N-terminal section; belongs to the UvrB family. This sequence in the C-terminal section; belongs to the helicase family. RecG subfamily.

It is found in the cytoplasm. Its function is as follows. Couples transcription and DNA repair by recognizing RNA polymerase (RNAP) stalled at DNA lesions. Mediates ATP-dependent release of RNAP and its truncated transcript from the DNA, and recruitment of nucleotide excision repair machinery to the damaged site. This Haemophilus influenzae (strain ATCC 51907 / DSM 11121 / KW20 / Rd) protein is Transcription-repair-coupling factor.